A 153-amino-acid chain; its full sequence is Bacteriohemerythrin (153 aa).

The Fe cation site is built by H21, H57, E61, H76, H80, H115, and D120.

It belongs to the hemerythrin family. In terms of assembly, monomer.

In terms of biological role, oxygen-binding protein. May be involved in a storage mechanism or for delivery to oxygen-requiring enzymes. The oxygen-binding site contains two iron atoms. The protein is Bacteriohemerythrin of Stenotrophomonas maltophilia (strain R551-3).